The chain runs to 297 residues: Small ribosomal subunit protein uS2 (297 aa).

Residues 263–289 show a composition bias toward low complexity; it reads AAPTSWEADGGDWAASSAAPAGESWAE. A disordered region spans residues 263-297; that stretch reads AAPTSWEADGGDWAASSAAPAGESWAETQPAEAKW.

This sequence belongs to the universal ribosomal protein uS2 family. In terms of assembly, component of the small ribosomal subunit. Mature ribosomes consist of a small (40S) and a large (60S) subunit. The 40S subunit contains about 33 different proteins and 1 molecule of RNA (18S). The 60S subunit contains about 49 different proteins and 3 molecules of RNA (25S, 5.8S and 5S). Interacts with rps21.

It localises to the cytoplasm. Its function is as follows. Required for the assembly and/or stability of the 40S ribosomal subunit. Required for the processing of the 20S rRNA-precursor to mature 18S rRNA in a late step of the maturation of 40S ribosomal subunits. In Neosartorya fischeri (strain ATCC 1020 / DSM 3700 / CBS 544.65 / FGSC A1164 / JCM 1740 / NRRL 181 / WB 181) (Aspergillus fischerianus), this protein is Small ribosomal subunit protein uS2 (rps0).